A 700-amino-acid chain; its full sequence is Elongation factor G 1 (700 aa).

Positions 8 to 290 (QNYRNIGISA…AVIEFMPSPI (283 aa)) constitute a tr-type G domain. Residues 17–24 (AHIDAGKT), 88–92 (DTPGH), and 142–145 (NKMD) contribute to the GTP site.

The protein belongs to the TRAFAC class translation factor GTPase superfamily. Classic translation factor GTPase family. EF-G/EF-2 subfamily.

It is found in the cytoplasm. Functionally, catalyzes the GTP-dependent ribosomal translocation step during translation elongation. During this step, the ribosome changes from the pre-translocational (PRE) to the post-translocational (POST) state as the newly formed A-site-bound peptidyl-tRNA and P-site-bound deacylated tRNA move to the P and E sites, respectively. Catalyzes the coordinated movement of the two tRNA molecules, the mRNA and conformational changes in the ribosome. This is Elongation factor G 1 from Polaromonas sp. (strain JS666 / ATCC BAA-500).